The primary structure comprises 263 residues: Pro-opiomelanocortin (263 aa).

The first 25 residues, 1–25 (MLHPVWGCVVAVMGVLWFYSSGVQS), serve as a signal peptide directing secretion. Gln-26 is modified (pyrrolidone carboxylic acid). Disulfide bonds link Cys-27–Cys-49 and Cys-33–Cys-45. The segment at 114 to 142 (SQPRDEVERESEEEEGLQQHRRDDKRSYS) is disordered. Over residues 130-142 (LQQHRRDDKRSYS) the composition is skewed to basic and acidic residues. A Valine amide modification is found at Val-152.

It belongs to the POMC family. Post-translationally, specific enzymatic cleavages at paired basic residues yield the different active peptides.

It is found in the secreted. Its function is as follows. Stimulates the adrenal glands to release cortisol. In terms of biological role, anorexigenic peptide. Increases the pigmentation of skin by increasing melanin production in melanocytes. Functionally, increases the pigmentation of skin by increasing melanin production in melanocytes. Endogenous orexigenic opiate. Its function is as follows. Endogenous opiate. The chain is Pro-opiomelanocortin (pomc) from Acipenser transmontanus (White sturgeon).